A 130-amino-acid polypeptide reads, in one-letter code: Iron-sulfur cluster insertion protein ErpA (130 aa).

Residues Cys-46, Cys-116, and Cys-118 each coordinate iron-sulfur cluster.

It belongs to the HesB/IscA family. As to quaternary structure, homodimer. It depends on iron-sulfur cluster as a cofactor.

Its function is as follows. Required for insertion of 4Fe-4S clusters for at least IspG. The sequence is that of Iron-sulfur cluster insertion protein ErpA from Legionella pneumophila (strain Lens).